The chain runs to 489 residues: Glycogen synthase (489 aa).

Arg20 provides a ligand contact to ADP-alpha-D-glucose.

It belongs to the glycosyltransferase 1 family. Bacterial/plant glycogen synthase subfamily.

The catalysed reaction is [(1-&gt;4)-alpha-D-glucosyl](n) + ADP-alpha-D-glucose = [(1-&gt;4)-alpha-D-glucosyl](n+1) + ADP + H(+). It participates in glycan biosynthesis; glycogen biosynthesis. In terms of biological role, synthesizes alpha-1,4-glucan chains using ADP-glucose. The protein is Glycogen synthase of Chlorobium phaeobacteroides (strain DSM 266 / SMG 266 / 2430).